Here is a 99-residue protein sequence, read N- to C-terminus: uncharacterized protein (99 aa).

An N-terminal signal peptide occupies residues 1-17 (MMMNAFFPAMALMVLVG). A lipid anchor (N-palmitoyl cysteine) is attached at cysteine 18. Cysteine 18 carries the S-diacylglycerol cysteine lipid modification.

The protein localises to the cell membrane. This is an uncharacterized protein from Shigella boydii serotype 4 (strain Sb227).